A 203-amino-acid polypeptide reads, in one-letter code: Urease accessory protein UreG (203 aa).

14-21 (GPVGSGKT) contributes to the GTP binding site.

Belongs to the SIMIBI class G3E GTPase family. UreG subfamily. In terms of assembly, homodimer. UreD, UreF and UreG form a complex that acts as a GTP-hydrolysis-dependent molecular chaperone, activating the urease apoprotein by helping to assemble the nickel containing metallocenter of UreC. The UreE protein probably delivers the nickel.

The protein resides in the cytoplasm. Functionally, facilitates the functional incorporation of the urease nickel metallocenter. This process requires GTP hydrolysis, probably effectuated by UreG. The chain is Urease accessory protein UreG from Rhizobium etli (strain ATCC 51251 / DSM 11541 / JCM 21823 / NBRC 15573 / CFN 42).